We begin with the raw amino-acid sequence, 479 residues long: MAISCAVGMEMQEPKMNGTLSAGAAAGYRQEREGFLPTTRNPATGRKPVQFLDFEGKTSFGMSVFNLSNAIMGSGILGLAYAMAHTGVIFFLALLLCIALLSSYSIHLLLTCASVVGIRAYEQLGQRAFGPAGKVVVAIIICLHNVGAMSSYLFIIKSELPLVIGTFLHMDPEGDWFLKGNLLIILVSLLIILPLALMKHLGYLGYTSSLSLTCMLFFLISVIYKKFQIGCDVSHNDTVVEAEQAPLQAFNSSCEAELFTVDSQMSYTVPIMAFAFVCHPEVLPIYTELCRPTQRRMQAVANMSIGAMFIMYGLTATFGYLTFYSTVKAEMLEMYTQEDMLILCVRLAVLLAVTLTVPVVLFPIRRALQQLLFPSKAFSWLRHVAIALILLILVNILVICVPTIRDIFGFIGSTSAPSLIFILPSVFYLRIVPTEVEPLFSWPKIQALCFGVLGVLFMAISLGFMFANWATGQSRMSGH.

Residues 1 to 61 lie on the Cytoplasmic side of the membrane; that stretch reads MAISCAVGME…LDFEGKTSFG (61 aa). A helical transmembrane segment spans residues 62–84; sequence MSVFNLSNAIMGSGILGLAYAMA. The Extracellular portion of the chain corresponds to 85 to 97; sequence HTGVIFFLALLLC. The chain crosses the membrane as a helical span at residues 98-118; sequence IALLSSYSIHLLLTCASVVGI. Residues 119 to 135 lie on the Cytoplasmic side of the membrane; the sequence is RAYEQLGQRAFGPAGKV. Residues 136 to 156 form a helical membrane-spanning segment; sequence VVAIIICLHNVGAMSSYLFII. Topologically, residues 157–176 are extracellular; the sequence is KSELPLVIGTFLHMDPEGDW. Residues 177-197 traverse the membrane as a helical segment; the sequence is FLKGNLLIILVSLLIILPLAL. The Cytoplasmic portion of the chain corresponds to 198-202; sequence MKHLG. Residues 203–223 traverse the membrane as a helical segment; it reads YLGYTSSLSLTCMLFFLISVI. Topologically, residues 224-264 are extracellular; it reads YKKFQIGCDVSHNDTVVEAEQAPLQAFNSSCEAELFTVDSQ. An intrachain disulfide couples Cys231 to Cys254. Asn236 carries an N-linked (GlcNAc...) asparagine glycan. The helical transmembrane segment at 265–285 threads the bilayer; the sequence is MSYTVPIMAFAFVCHPEVLPI. The Cytoplasmic segment spans residues 286–302; the sequence is YTELCRPTQRRMQAVAN. Residues 303–323 traverse the membrane as a helical segment; sequence MSIGAMFIMYGLTATFGYLTF. Topologically, residues 324–341 are extracellular; the sequence is YSTVKAEMLEMYTQEDML. A helical transmembrane segment spans residues 342–362; the sequence is ILCVRLAVLLAVTLTVPVVLF. Residues 363–383 are Cytoplasmic-facing; the sequence is PIRRALQQLLFPSKAFSWLRH. The helical transmembrane segment at 384–404 threads the bilayer; sequence VAIALILLILVNILVICVPTI. Topologically, residues 405–406 are extracellular; the sequence is RD. A helical transmembrane segment spans residues 407–427; that stretch reads IFGFIGSTSAPSLIFILPSVF. Residues 428 to 446 are Cytoplasmic-facing; it reads YLRIVPTEVEPLFSWPKIQ. The chain crosses the membrane as a helical span at residues 447–467; that stretch reads ALCFGVLGVLFMAISLGFMFA. The Extracellular segment spans residues 468–479; sequence NWATGQSRMSGH.

This sequence belongs to the amino acid/polyamine transporter 2 family. In terms of tissue distribution, expressed in the ganglion cell layer and the nerve fiber layer (at protein level). Also expreseed in the cells of the inner nuclear layer and in the inner plexiform layer (at protein level). Expressed in Mueller and ganglion retinal cell.

It is found in the cell membrane. It carries out the reaction L-glutamine(out) + Na(+)(out) + H(+)(in) = L-glutamine(in) + Na(+)(in) + H(+)(out). The enzyme catalyses L-serine(out) + Na(+)(out) + H(+)(in) = L-serine(in) + Na(+)(in) + H(+)(out). It catalyses the reaction L-alanine(out) + Na(+)(out) + H(+)(in) = L-alanine(in) + Na(+)(in) + H(+)(out). The catalysed reaction is glycine(out) + Na(+)(out) + H(+)(in) = glycine(in) + Na(+)(in) + H(+)(out). It carries out the reaction L-asparagine(out) + Na(+)(out) + H(+)(in) = L-asparagine(in) + Na(+)(in) + H(+)(out). The enzyme catalyses L-histidine(out) + Na(+)(out) + H(+)(in) = L-histidine(in) + Na(+)(in) + H(+)(out). It catalyses the reaction L-cysteine(out) + Na(+)(out) + H(+)(in) = L-cysteine(in) + Na(+)(in) + H(+)(out). Not inhibited by lithium. Partial allosteric regulation on ions sodium binding. Its function is as follows. Symporter that cotransports neutral amino acids and sodium ions, coupled to an H(+) antiporter activity. Releases L-glutamine and glycine from astroglial cells and may participate in the glutamate/GABA-L-glutamine cycle and the NMDA receptors activation. In addition, contributes significantly to L-glutamine uptake in retina, namely in ganglion and Mueller cells therefore, participates in the retinal glutamate-glutamine cycle. The transport activity is pH sensitive, Li(+) tolerant, bidirectional and associated with large uncoupled fluxes of protons. Moreover functions in both direction and is associated with large uncoupled fluxes of protons. The transport is electroneutral coupled to the cotransport of 1 Na(+) and the antiport of 1 H(+). May have a particular importance for modulation of net hepatic glutamine flux. This chain is Sodium-coupled neutral amino acid transporter 5, found in Mus musculus (Mouse).